We begin with the raw amino-acid sequence, 238 residues long: ATP synthase subunit a (238 aa).

Transmembrane regions (helical) follow at residues 18 to 38 (LTLL…VFWA), 76 to 96 (YSLL…LGLF), 114 to 134 (NLAF…IEGV), 166 to 186 (SLAI…GLIV), and 193 to 213 (VYWW…SVFI).

This sequence belongs to the ATPase A chain family. F-type ATPases have 2 components, CF(1) - the catalytic core - and CF(0) - the membrane proton channel. CF(1) has five subunits: alpha(3), beta(3), gamma(1), delta(1), epsilon(1). CF(0) has three main subunits: a(1), b(2) and c(9-12). The alpha and beta chains form an alternating ring which encloses part of the gamma chain. CF(1) is attached to CF(0) by a central stalk formed by the gamma and epsilon chains, while a peripheral stalk is formed by the delta and b chains.

The protein localises to the cell membrane. In terms of biological role, key component of the proton channel; it plays a direct role in the translocation of protons across the membrane. The sequence is that of ATP synthase subunit a from Streptococcus pyogenes serotype M1.